The chain runs to 199 residues: ATP-dependent Clp protease proteolytic subunit (199 aa).

Serine 97 (nucleophile) is an active-site residue. Histidine 122 is a catalytic residue.

Belongs to the peptidase S14 family. As to quaternary structure, fourteen ClpP subunits assemble into 2 heptameric rings which stack back to back to give a disk-like structure with a central cavity, resembling the structure of eukaryotic proteasomes.

The protein resides in the cytoplasm. The enzyme catalyses Hydrolysis of proteins to small peptides in the presence of ATP and magnesium. alpha-casein is the usual test substrate. In the absence of ATP, only oligopeptides shorter than five residues are hydrolyzed (such as succinyl-Leu-Tyr-|-NHMec, and Leu-Tyr-Leu-|-Tyr-Trp, in which cleavage of the -Tyr-|-Leu- and -Tyr-|-Trp bonds also occurs).. Cleaves peptides in various proteins in a process that requires ATP hydrolysis. Has a chymotrypsin-like activity. Plays a major role in the degradation of misfolded proteins. This is ATP-dependent Clp protease proteolytic subunit from Geotalea daltonii (strain DSM 22248 / JCM 15807 / FRC-32) (Geobacter daltonii).